The chain runs to 527 residues: Bifunctional dihydrofolate reductase-thymidylate synthase (527 aa).

Positions 28–238 (PFSVVVASDE…KKYQFEKLVP (211 aa)) constitute a DHFR domain. Residue Val32 participates in substrate binding. Residues Ala34 and 40-46 (GIGDGGT) each bind NADP(+). Residue Asp54 coordinates substrate. NADP(+)-binding positions include 84 to 86 (RKT) and 105 to 108 (LSRS). Positions 160, 166, and 184 each coordinate substrate. NADP(+) is bound at residue 161–168 (GGGTIYKQ). A thymidylate synthase region spans residues 243–527 (EEQYLNLVGR…YPVISMEMAV (285 aa)). Arg263 contributes to the dUMP binding site. The active site involves Cys409. DUMP contacts are provided by residues His410, 428–432 (QRSCD), Asn440, and 470–472 (HVY).

In the N-terminal section; belongs to the dihydrofolate reductase family. The protein in the C-terminal section; belongs to the thymidylate synthase family. Homodimer.

It catalyses the reaction dUMP + (6R)-5,10-methylene-5,6,7,8-tetrahydrofolate = 7,8-dihydrofolate + dTMP. The catalysed reaction is (6S)-5,6,7,8-tetrahydrofolate + NADP(+) = 7,8-dihydrofolate + NADPH + H(+). The protein operates within pyrimidine metabolism; dTTP biosynthesis. It functions in the pathway cofactor biosynthesis; tetrahydrofolate biosynthesis; 5,6,7,8-tetrahydrofolate from 7,8-dihydrofolate: step 1/1. Its function is as follows. Bifunctional enzyme. Involved in de novo dTMP biosynthesis. Key enzyme in folate metabolism. Catalyzes an essential reaction for de novo glycine and purine synthesis, DNA precursor synthesis, and for the conversion of dUMP to dTMP. In Trypanosoma brucei brucei, this protein is Bifunctional dihydrofolate reductase-thymidylate synthase.